The following is a 109-amino-acid chain: Mannose-specific lectin (109 aa).

A Bulb-type lectin domain is found at 25-109 (MQEDCNLVLY…ARWATGTNIH (85 aa)). The alpha-D-mannopyranose site is built by Q26, D28, N30, Y34, D37, K38, W41, A42, N44, Q57, D59, N61, Y65, I72, W73, N76, N83, Q89, D91, N93, Y97, and W102. Residues C29 and C52 are joined by a disulfide bond.

As to quaternary structure, homotetramer; antiparallel. In terms of tissue distribution, detected in bulbs (at protein level).

It is found in the secreted. With respect to regulation, strongly inhibited by alpha-1,6-linked mannotriose. Inhibited by various oligosaccharides of P.pastoris mannan including, Man(alpha-l,6)Man-alpha-O-Me, Man(alpha-l,2)Man, Man(alpha-l,3)Man-alpha-O-Me, Man(alpha-l,2)Man, alpha-1,2-linked mannotriose, and Man(alpha-1,6)Glc, in order of decreasing potency. Weakly inhibited by elsinotetraose. Not inhibited by maltose or nigerose. D-mannose-binding lectin which binds alpha-D-linked mannose. Displays a high affinity for alpha-(1-6)-mannose oligomers. Able to interact with both terminal and internal alpha-D-mannosyl residues. Displays antiviral activity and therefore may contribute to defense against infections. The sequence is that of Mannose-specific lectin from Narcissus pseudonarcissus (Daffodil).